Reading from the N-terminus, the 360-residue chain is Heat-inducible transcription repressor HrcA (360 aa).

Belongs to the HrcA family.

In terms of biological role, negative regulator of class I heat shock genes (grpE-dnaK-dnaJ and groELS operons). Prevents heat-shock induction of these operons. This is Heat-inducible transcription repressor HrcA from Mesorhizobium japonicum (strain LMG 29417 / CECT 9101 / MAFF 303099) (Mesorhizobium loti (strain MAFF 303099)).